The chain runs to 194 residues: Recombination protein RecR (194 aa).

The segment at 55–70 adopts a C4-type zinc-finger fold; that stretch reads CRECGNLAEGELCPIC. The Toprim domain occupies 78–171; that stretch reads SLLAVVESVA…RVTRPAYGLP (94 aa).

It belongs to the RecR family.

Its function is as follows. May play a role in DNA repair. It seems to be involved in an RecBC-independent recombinational process of DNA repair. It may act with RecF and RecO. The sequence is that of Recombination protein RecR from Thermus thermophilus (strain ATCC BAA-163 / DSM 7039 / HB27).